Consider the following 406-residue polypeptide: Mitochondrial potassium channel (406 aa).

The transit peptide at 1-35 directs the protein to the mitochondrion; it reads MTGCSPVFAMQHVVGVPRILVRRTFLGTDVTMTRT. At 36 to 198 the chain is on the mitochondrial matrix side; sequence LCSPGPREKR…KERTRAERTK (163 aa). The stretch at 113-140 forms a coiled coil; that stretch reads VREAREGLEAQQTKLKEVRDRLDRVSRE. A helical membrane pass occupies residues 199 to 219; the sequence is NWSLIGSVLGALIGVAGSTYV. The Mitochondrial intermembrane segment spans residues 220 to 382; sequence NRVRLQELKA…LEAQANRNTV (163 aa). A helical transmembrane segment spans residues 383–403; that stretch reads SSTLVTCVTFLATLPLLYMLF. The Mitochondrial matrix segment spans residues 404 to 406; it reads KTS.

The mitochondrial potassium channel (mitoK(ATP)) is composed of 4 subunits of CCDC51/MITOK and 4 subunits of ABCB8/MITOSUR.

Its subcellular location is the mitochondrion inner membrane. It catalyses the reaction K(+)(in) = K(+)(out). Inhibited by ATP via mitoK(ATP) channel. In terms of biological role, pore-forming subunit of the mitochondrial ATP-gated potassium channel (mitoK(ATP)). Together with ATP-binding subunit ABCB8/MITOSUR of the mitoK(ATP) channel, mediates ATP-dependent K(+) currents across the mitochondrial inner membrane. An increase in ATP intracellular levels closes the channel, inhibiting K(+) transport, whereas a decrease in ATP levels enhances K(+) uptake in the mitochondrial matrix. May contribute to the homeostatic control of cellular metabolism under stress conditions by regulating the mitochondrial matrix volume. This chain is Mitochondrial potassium channel, found in Mus musculus (Mouse).